The chain runs to 949 residues: Protocadherin alpha-11 (949 aa).

Residues methionine 1–glycine 29 form the signal peptide. Cadherin domains lie at glutamine 30 to phenylalanine 133, alanine 157 to phenylalanine 242, aspartate 243 to valine 349, alanine 350 to phenylalanine 454, alanine 455 to leucine 564, and valine 580 to alanine 677. At glutamine 30–asparagine 696 the chain is on the extracellular side. Residues asparagine 265 and asparagine 304 are each glycosylated (N-linked (GlcNAc...) asparagine). A glycan (N-linked (GlcNAc...) asparagine) is linked at asparagine 547. The chain crosses the membrane as a helical span at residues valine 697–tyrosine 717. Topologically, residues threonine 718–glutamine 949 are cytoplasmic. 2 PXXP repeats span residues proline 733–proline 736 and proline 773–proline 776. Residues proline 733–proline 893 form a 6 X 4 AA repeats of P-X-X-P region. Disordered stretches follow at residues arginine 753 to tyrosine 807 and isoleucine 826 to glutamine 949. A compositionally biased stretch (basic and acidic residues) spans asparagine 780–glutamate 789. PXXP repeat units lie at residues proline 795–proline 798, proline 831–proline 834, proline 872–proline 875, and proline 890–proline 893. The segment covering aspartate 908–lysine 922 has biased composition (basic and acidic residues).

The protein resides in the cell membrane. Potential calcium-dependent cell-adhesion protein. May be involved in the establishment and maintenance of specific neuronal connections in the brain. This Homo sapiens (Human) protein is Protocadherin alpha-11 (PCDHA11).